Here is a 463-residue protein sequence, read N- to C-terminus: Asparagine--tRNA ligase (463 aa).

The protein belongs to the class-II aminoacyl-tRNA synthetase family. Homodimer.

It is found in the cytoplasm. It carries out the reaction tRNA(Asn) + L-asparagine + ATP = L-asparaginyl-tRNA(Asn) + AMP + diphosphate + H(+). The sequence is that of Asparagine--tRNA ligase from Acholeplasma laidlawii (strain PG-8A).